A 197-amino-acid polypeptide reads, in one-letter code: Inosine triphosphate pyrophosphatase (197 aa).

10–15 (TGNANK) contacts ITP. Position 45 (E45) interacts with Mg(2+). ITP is bound by residues K58, 76-77 (DT), K93, 151-154 (FGWD), K175, and 180-181 (HR).

The protein belongs to the HAM1 NTPase family. As to quaternary structure, homodimer. Mg(2+) serves as cofactor. The cofactor is Mn(2+).

The protein localises to the cytoplasm. It localises to the nucleus. It carries out the reaction ITP + H2O = IMP + diphosphate + H(+). The enzyme catalyses dITP + H2O = dIMP + diphosphate + H(+). It catalyses the reaction XTP + H2O = XMP + diphosphate + H(+). The catalysed reaction is N(6)-hydroxy-dATP + H2O = N(6)-hydroxy-dAMP + diphosphate + H(+). Pyrophosphatase that hydrolyzes the non-canonical purine nucleotides inosine triphosphate (ITP), deoxyinosine triphosphate (dITP) as well as 2'-deoxy-N-6-hydroxylaminopurine triphosphate (dHAPTP) and 5-bromodeoxyuridine 5'-triphosphate (BrdUTP) to their respective monophosphate derivatives. Xanthosine 5'-triphosphate (XTP) is also a potential substrate. The enzyme does not distinguish between the deoxy- and ribose forms. Probably excludes non-canonical purines from RNA and DNA precursor pools, thus preventing their incorporation into RNA and DNA and avoiding chromosomal lesions. This Saccharomyces cerevisiae (strain ATCC 204508 / S288c) (Baker's yeast) protein is Inosine triphosphate pyrophosphatase.